Reading from the N-terminus, the 191-residue chain is Calcium-activated potassium channel subunit beta-1 (191 aa).

Residues 2-18 (GKKLVMAQRRGETRALC) lie on the Cytoplasmic side of the membrane. Residues 19 to 39 (LGVAMVVGAVITYYILGTTVL) form a helical membrane-spanning segment. Over 40–157 (PLYQKSVWTQ…YRRLYGPQSL (118 aa)) the chain is Extracellular. Residues Asn80 and Asn142 are each glycosylated (N-linked (GlcNAc...) asparagine). The helical transmembrane segment at 158–178 (LFSLFWPTFLLTGGLLIIVMV) threads the bilayer. At 179–191 (KINQSLSILAAQR) the chain is on the cytoplasmic side.

It belongs to the KCNMB (TC 8.A.14.1) family. KCNMB1 subfamily. As to quaternary structure, interacts with KCNMA1 tetramer. There are probably 4 molecules of KCMNB1 per KCNMA1 tetramer. Post-translationally, N-glycosylated.

It is found in the membrane. Functionally, regulatory subunit of the calcium activated potassium KCNMA1 (maxiK) channel. Modulates the calcium sensitivity and gating kinetics of KCNMA1, thereby contributing to KCNMA1 channel diversity. Increases the apparent Ca(2+)/voltage sensitivity of the KCNMA1 channel. It also modifies KCNMA1 channel kinetics and alters its pharmacological properties. It slows down the activation and the deactivation kinetics of the channel. Acts as a negative regulator of smooth muscle contraction by enhancing the calcium sensitivity to KCNMA1. Its presence is also a requirement for internal binding of the KCNMA1 channel opener dehydrosoyasaponin I (DHS-1) triterpene glycoside and for external binding of the agonist hormone 17-beta-estradiol (E2). Increases the binding activity of charybdotoxin (CTX) toxin to KCNMA1 peptide blocker by increasing the CTX association rate and decreasing the dissociation rate. This is Calcium-activated potassium channel subunit beta-1 (KCNMB1) from Bos taurus (Bovine).